The primary structure comprises 1234 residues: DNA-directed RNA polymerase subunit beta (1234 aa).

The interval 1169 to 1234 (ESVDEDADEL…LDLDDFGDEH (66 aa)) is disordered. 2 stretches are compositionally biased toward acidic residues: residues 1171 to 1180 (VDEDADELEV) and 1191 to 1234 (EKEE…GDEH).

It belongs to the RNA polymerase beta chain family. The RNAP catalytic core consists of 2 alpha, 1 beta, 1 beta' and 1 omega subunit. When a sigma factor is associated with the core the holoenzyme is formed, which can initiate transcription.

It catalyses the reaction RNA(n) + a ribonucleoside 5'-triphosphate = RNA(n+1) + diphosphate. DNA-dependent RNA polymerase catalyzes the transcription of DNA into RNA using the four ribonucleoside triphosphates as substrates. The polypeptide is DNA-directed RNA polymerase subunit beta (Clostridium botulinum (strain Langeland / NCTC 10281 / Type F)).